The chain runs to 612 residues: Dihydroxy-acid dehydratase (612 aa).

Aspartate 81 serves as a coordination point for Mg(2+). Cysteine 122 is a binding site for [2Fe-2S] cluster. Residues aspartate 123 and lysine 124 each coordinate Mg(2+). Lysine 124 carries the N6-carboxylysine modification. Cysteine 195 provides a ligand contact to [2Fe-2S] cluster. Glutamate 491 serves as a coordination point for Mg(2+). The active-site Proton acceptor is serine 517.

It belongs to the IlvD/Edd family. In terms of assembly, homodimer. Requires [2Fe-2S] cluster as cofactor. Mg(2+) serves as cofactor.

The catalysed reaction is (2R)-2,3-dihydroxy-3-methylbutanoate = 3-methyl-2-oxobutanoate + H2O. The enzyme catalyses (2R,3R)-2,3-dihydroxy-3-methylpentanoate = (S)-3-methyl-2-oxopentanoate + H2O. It functions in the pathway amino-acid biosynthesis; L-isoleucine biosynthesis; L-isoleucine from 2-oxobutanoate: step 3/4. It participates in amino-acid biosynthesis; L-valine biosynthesis; L-valine from pyruvate: step 3/4. Its function is as follows. Functions in the biosynthesis of branched-chain amino acids. Catalyzes the dehydration of (2R,3R)-2,3-dihydroxy-3-methylpentanoate (2,3-dihydroxy-3-methylvalerate) into 2-oxo-3-methylpentanoate (2-oxo-3-methylvalerate) and of (2R)-2,3-dihydroxy-3-methylbutanoate (2,3-dihydroxyisovalerate) into 2-oxo-3-methylbutanoate (2-oxoisovalerate), the penultimate precursor to L-isoleucine and L-valine, respectively. This is Dihydroxy-acid dehydratase from Sinorhizobium fredii (strain NBRC 101917 / NGR234).